Here is a 551-residue protein sequence, read N- to C-terminus: Arginine--tRNA ligase (551 aa).

Positions 125–135 match the 'HIGH' region motif; it reads ANPTGPLHIGH.

It belongs to the class-I aminoacyl-tRNA synthetase family. As to quaternary structure, monomer.

It localises to the cytoplasm. It catalyses the reaction tRNA(Arg) + L-arginine + ATP = L-arginyl-tRNA(Arg) + AMP + diphosphate. This chain is Arginine--tRNA ligase, found in Oleidesulfovibrio alaskensis (strain ATCC BAA-1058 / DSM 17464 / G20) (Desulfovibrio alaskensis).